Consider the following 144-residue polypeptide: Large ribosomal subunit protein uL15 (144 aa).

The interval 1-53 is disordered; that stretch reads MRLNTLSPAEGAKHAPKRLGRGIGSGLGKTGGRGHKGQKSRSGGGVRRGFEGG. The span at 21-31 shows a compositional bias: gly residues; sequence RGIGSGLGKTG.

The protein belongs to the universal ribosomal protein uL15 family. As to quaternary structure, part of the 50S ribosomal subunit.

Its function is as follows. Binds to the 23S rRNA. The protein is Large ribosomal subunit protein uL15 of Pectobacterium carotovorum subsp. carotovorum (strain PC1).